The following is a 69-amino-acid chain: Large ribosomal subunit protein bL31 (69 aa).

C16, C18, C38, and C41 together coordinate Zn(2+).

Belongs to the bacterial ribosomal protein bL31 family. Type A subfamily. Part of the 50S ribosomal subunit. Zn(2+) is required as a cofactor.

Functionally, binds the 23S rRNA. The chain is Large ribosomal subunit protein bL31 from Thermobifida fusca (strain YX).